Here is a 154-residue protein sequence, read N- to C-terminus: Interleukin-2 (154 aa).

The signal sequence occupies residues 1–20 (MYRMQLLSCIALSLALVTNS). Residue Thr-23 is glycosylated (O-linked (GalNAc...) threonine). A disulfide bridge links Cys-78 with Cys-126.

The protein belongs to the IL-2 family.

It is found in the secreted. Its function is as follows. Cytokine produced by activated CD4-positive helper T-cells and to a lesser extend activated CD8-positive T-cells and natural killer (NK) cells that plays pivotal roles in the immune response and tolerance. Binds to a receptor complex composed of either the high-affinity trimeric IL-2R (IL2RA/CD25, IL2RB/CD122 and IL2RG/CD132) or the low-affinity dimeric IL-2R (IL2RB and IL2RG). Interaction with the receptor leads to oligomerization and conformation changes in the IL-2R subunits resulting in downstream signaling starting with phosphorylation of JAK1 and JAK3. In turn, JAK1 and JAK3 phosphorylate the receptor to form a docking site leading to the phosphorylation of several substrates including STAT5. This process leads to activation of several pathways including STAT, phosphoinositide-3-kinase/PI3K and mitogen-activated protein kinase/MAPK pathways. Functions as a T-cell growth factor and can increase NK-cell cytolytic activity as well. Promotes strong proliferation of activated B-cells and subsequently immunoglobulin production. Plays a pivotal role in regulating the adaptive immune system by controlling the survival and proliferation of regulatory T-cells, which are required for the maintenance of immune tolerance. Moreover, participates in the differentiation and homeostasis of effector T-cell subsets, including Th1, Th2, Th17 as well as memory CD8-positive T-cells. This Papio anubis (Olive baboon) protein is Interleukin-2 (IL2).